The primary structure comprises 148 residues: MARFTIVLAVLFAAALVSASAHKTVVTTSVAEEGEEENQRGCEWESRQCQMRHCMQWMRSMRGQYEESFLRSAEANQGQFEHFRECCNELRDVKSHCRCEALRCMMRQMQQEYGMEQEMQQMQQMMQYLPRMCGMSYPTECRMRPIFA.

The first 19 residues, 1–19 (MARFTIVLAVLFAAALVSA), serve as a signal peptide directing secretion. Residues 20–38 (SAHKTVVTTSVAEEGEEEN) constitute a propeptide that is removed on maturation. The segment at 24-94 (TVVTTSVAEE…ECCNELRDVK (71 aa)) is involved in IgE-binding. Disulfide bonds link cysteine 42–cysteine 97, cysteine 54–cysteine 86, cysteine 87–cysteine 133, and cysteine 99–cysteine 141. 3 immunodominant epitope; binds to IgE of 14 patients out of 15 tested regions span residues 46 to 55 (SRQCQMRHCM), 48 to 57 (QCQMRHCMQW), and 76 to 86 (NQGQFEHFREC). Positions 69–76 (FLRSAEAN) are excised as a propeptide. Positions 147 to 148 (FA) are excised as a propeptide.

Belongs to the 2S seed storage albumins family. As to quaternary structure, the mature protein consists of a small and a large chain linked by disulfide bonds. Expressed in seeds (at protein level).

In terms of biological role, seed storage protein. In Sesamum indicum (Oriental sesame), this protein is 2S seed storage protein 1.